The primary structure comprises 525 residues: GMP synthase [glutamine-hydrolyzing] (525 aa).

Residues 16–205 (PVLVVDFGAQ…LHDFAGLGAD (190 aa)) enclose the Glutamine amidotransferase type-1 domain. Cys93 acts as the Nucleophile in catalysis. Residues His179 and Glu181 contribute to the active site. The 194-residue stretch at 206–399 (WTAANIAGVL…LGLPEEIVAR (194 aa)) folds into the GMPS ATP-PPase domain. 233 to 239 (SGGVDSA) provides a ligand contact to ATP.

As to quaternary structure, homodimer.

It carries out the reaction XMP + L-glutamine + ATP + H2O = GMP + L-glutamate + AMP + diphosphate + 2 H(+). It participates in purine metabolism; GMP biosynthesis; GMP from XMP (L-Gln route): step 1/1. Its function is as follows. Catalyzes the synthesis of GMP from XMP. This Mycolicibacterium paratuberculosis (strain ATCC BAA-968 / K-10) (Mycobacterium paratuberculosis) protein is GMP synthase [glutamine-hydrolyzing].